The following is a 305-amino-acid chain: Aspartate carbamoyltransferase catalytic subunit (305 aa).

Positions 56 and 57 each coordinate carbamoyl phosphate. Residue K85 participates in L-aspartate binding. Residues R106, H134, and Q137 each contribute to the carbamoyl phosphate site. Residues R167 and R227 each coordinate L-aspartate. Carbamoyl phosphate-binding residues include L266 and P267.

Belongs to the aspartate/ornithine carbamoyltransferase superfamily. ATCase family. As to quaternary structure, heterooligomer of catalytic and regulatory chains.

The enzyme catalyses carbamoyl phosphate + L-aspartate = N-carbamoyl-L-aspartate + phosphate + H(+). Its pathway is pyrimidine metabolism; UMP biosynthesis via de novo pathway; (S)-dihydroorotate from bicarbonate: step 2/3. Catalyzes the condensation of carbamoyl phosphate and aspartate to form carbamoyl aspartate and inorganic phosphate, the committed step in the de novo pyrimidine nucleotide biosynthesis pathway. The protein is Aspartate carbamoyltransferase catalytic subunit of Thermoplasma volcanium (strain ATCC 51530 / DSM 4299 / JCM 9571 / NBRC 15438 / GSS1).